The chain runs to 105 residues: uncharacterized protein (105 aa).

Residues 22 to 105 are disordered; that stretch reads GSAGHGATEA…KKRIIKGKVM (84 aa). Over residues 61–83 the composition is skewed to basic and acidic residues; sequence HDSRPARGDARKRHCQENNKTDR. Basic residues predominate over residues 93 to 105; that stretch reads NRRKKRIIKGKVM.

This is an uncharacterized protein from Escherichia coli (strain K12).